The following is a 540-amino-acid chain: 2-isopropylmalate synthase (540 aa).

Residues 8-271 (VLIFDTTLRD…NPFFGREEDS (264 aa)) enclose the Pyruvate carboxyltransferase domain. Aspartate 17, histidine 208, histidine 210, and asparagine 244 together coordinate Mn(2+). Residues 408–540 (QLKLVQVSCG…PVVLESRPTL (133 aa)) are regulatory domain.

Belongs to the alpha-IPM synthase/homocitrate synthase family. LeuA type 1 subfamily. As to quaternary structure, homodimer. Mn(2+) is required as a cofactor.

It localises to the cytoplasm. The catalysed reaction is 3-methyl-2-oxobutanoate + acetyl-CoA + H2O = (2S)-2-isopropylmalate + CoA + H(+). It functions in the pathway amino-acid biosynthesis; L-leucine biosynthesis; L-leucine from 3-methyl-2-oxobutanoate: step 1/4. Its function is as follows. Catalyzes the condensation of the acetyl group of acetyl-CoA with 3-methyl-2-oxobutanoate (2-ketoisovalerate) to form 3-carboxy-3-hydroxy-4-methylpentanoate (2-isopropylmalate). The polypeptide is 2-isopropylmalate synthase (Synechococcus sp. (strain CC9605)).